A 516-amino-acid polypeptide reads, in one-letter code: Delta(24)-sterol reductase (516 aa).

The N-terminal stretch at 1–22 (MEPAVSLAVCALLFLLWVRVKG) is a signal peptide. Over 23-31 (LEFVLIHQR) the chain is Lumenal. Residues 32 to 52 (WVFVCLFLLPLSLIFDIYYYV) form a helical membrane-spanning segment. Residues 53-516 (RAWVVFKLSS…YDKICKAARH (464 aa)) lie on the Cytoplasmic side of the membrane. One can recognise an FAD-binding PCMH-type domain in the interval 58–234 (FKLSSAPRLH…VAAEIRIIPA (177 aa)). 163–175 (TVGGLIMGTGIES) is an FAD binding site.

This sequence belongs to the FAD-binding oxidoreductase/transferase type 4 family. In terms of assembly, interacts with DHCR7; this interaction regulates DHCR7 activity. Requires FAD as cofactor.

It is found in the endoplasmic reticulum membrane. The protein localises to the golgi apparatus membrane. The enzyme catalyses cholesterol + NADP(+) = desmosterol + NADPH + H(+). The catalysed reaction is lanosterol + NADPH + H(+) = 24,25-dihydrolanosterol + NADP(+). It carries out the reaction 5alpha-cholest-8-en-3beta-ol + NADP(+) = zymosterol + NADPH + H(+). The protein operates within steroid biosynthesis; cholesterol biosynthesis. In terms of biological role, catalyzes the reduction of the delta-24 double bond of sterol intermediates during cholesterol biosynthesis. In addition to its cholesterol-synthesizing activity, can protect cells from oxidative stress by reducing caspase 3 activity during apoptosis induced by oxidative stress. Also protects against amyloid-beta peptide-induced apoptosis. The polypeptide is Delta(24)-sterol reductase (Dhcr24) (Rattus norvegicus (Rat)).